A 249-amino-acid chain; its full sequence is Tegument protein UL51 homolog (249 aa).

The protein belongs to the herpesviridae UL51 family. As to quaternary structure, oligomerizes. Interacts with MDV019; this interaction mediates MDV019 incorporation to virions. Phosphorylated.

It localises to the virion tegument. Its subcellular location is the host cytoplasm. It is found in the host Golgi apparatus. Its function is as follows. Plays several roles during the time course of infection, including egress of virus particles from the perinuclear space and secondary envelopment of cytoplasmic capsids that bud into specific trans-Golgi network (TGN)-derived membranes. The sequence is that of Tegument protein UL51 homolog (MDV065) from Gallus gallus (Chicken).